The sequence spans 303 residues: N-acetyl-D-glucosamine kinase (303 aa).

ATP-binding positions include G4–K11 and G133–L140. Zn(2+) is bound by residues H157, C177, C179, and C184.

It belongs to the ROK (NagC/XylR) family. NagK subfamily.

It catalyses the reaction N-acetyl-D-glucosamine + ATP = N-acetyl-D-glucosamine 6-phosphate + ADP + H(+). It functions in the pathway cell wall biogenesis; peptidoglycan recycling. Catalyzes the phosphorylation of N-acetyl-D-glucosamine (GlcNAc) derived from cell-wall degradation, yielding GlcNAc-6-P. This Salmonella agona (strain SL483) protein is N-acetyl-D-glucosamine kinase.